Here is an 80-residue protein sequence, read N- to C-terminus: Defensin-like protein 16 (80 aa).

An N-terminal signal peptide occupies residues 1 to 29; that stretch reads MAKFASIITLIFAALVLFAAFDAPAMVEA. Q30 is subject to Pyrrolidone carboxylic acid. 4 disulfides stabilise this stretch: C33–C80, C44–C65, C50–C74, and C54–C76.

It belongs to the DEFL family. In terms of tissue distribution, predominantly expressed in leaves.

It is found in the secreted. In terms of biological role, confers broad-spectrum resistance to pathogens. Has antifungal activity in vitro. This Arabidopsis thaliana (Mouse-ear cress) protein is Defensin-like protein 16 (PDF1.2A).